A 273-amino-acid polypeptide reads, in one-letter code: Hydroxynaphthalene reductase arp2 (273 aa).

NADP(+) contacts are provided by Ile-24, Asp-70, Asn-97, and Arg-130. Active-site proton donor residues include Ser-146 and Ser-147. Residues Tyr-160, Lys-164, Val-193, and Ser-195 each coordinate NADP(+). The Proton acceptor role is filled by Tyr-160. Lys-164 (lowers pKa of active site Tyr) is an active-site residue.

It belongs to the short-chain dehydrogenases/reductases (SDR) family.

It localises to the endosome. It functions in the pathway pigment biosynthesis; melanin biosynthesis. Tricyclazole and pyroquilon inhibit arp2 hydroxynaphtalene reductase activity. Its function is as follows. Hydroxynaphthalene reductase; part of the gene cluster that mediates the biosynthesis of dihydroxynaphthalene (DHN)-melanin, a bluish-green pigment and a structural component of the conidial wall. The first step of the pathway is the production of the heptaketide naphtopyrone YWA1 by the polyketide synthase alb1 though condensation of acetyl-CoA with malonyl-CoA. The naphtopyrone YWA1 is then converted to the pentaketide 1,3,6,8-tetrahydroxynaphthalene (1,3,6,8-THN) by the heptaketide hydrolyase ayg1 though chain-length shortening. 1,3,6,8-THN is substrate of the hydroxynaphthalene reductase arp2 to yield scytalone. The scytalone dehydratase arp1 then reduces scytalone to 1,3,8-THN. 1,3,8-THN is also substrate of the hydroxynaphthalene reductase arp2 to yield vermelone. Vermelone is further converted by the multicopper oxidase abr1 to 1,8-DHN. Finally the laccase abr2 transforms 1,8-DHN to DHN-melanin. DHN-melanin biosynthesis appears to be initiated in endosomes where early enzymes (abl1, ayg1, arp1 and arp2) localize, with exocytosis leading to melanin deposition on the cell surface where late enzymes (abr1 and abr2) localize. DHN-melanin is an important structural component of the outer cell wall and is required for the presence of conidial surface hydrophobins. DHN-melanin also plays a crucial role in fungal virulence, including a protective role against the host's immune defenses. DHN-melanin also protects conidia against amoeba predation. The protein is Hydroxynaphthalene reductase arp2 of Aspergillus fumigatus (strain ATCC MYA-4609 / CBS 101355 / FGSC A1100 / Af293) (Neosartorya fumigata).